The chain runs to 384 residues: Prokineticin receptor 2 (384 aa).

At 1 to 53 the chain is on the extracellular side; that stretch reads MAAQNGNASFPANFSIPQEHASSLPFNFSYDDYDLPLDEDEDMTKTQTFFAAK. N-linked (GlcNAc...) asparagine glycans are attached at residues asparagine 7, asparagine 13, and asparagine 27. The helical transmembrane segment at 54–74 threads the bilayer; the sequence is IVIGVALVGIMLTCGIGNFVF. Residues 75–89 are Cytoplasmic-facing; the sequence is ITALTRYKKLRNLTN. Residues 90–110 traverse the membrane as a helical segment; the sequence is LLIANLAISDFLVAIICCPFE. The Extracellular segment spans residues 111 to 137; sequence MDYYVVHQLSWEHGHVLCACINYLRTV. Cysteine 128 and cysteine 208 are joined by a disulfide. Residues 138 to 158 traverse the membrane as a helical segment; sequence SLYVSTNALLAIAIDRYLAIV. Residues 159-171 lie on the Cytoplasmic side of the membrane; that stretch reads HPLKPRMNYQTAS. A helical transmembrane segment spans residues 172-192; the sequence is FLIALVWMVSILISIPSAYFT. Residues 193-223 lie on the Extracellular side of the membrane; it reads KETVLFIVKNQKKIFCGQVWPVDQQLYYKSY. The chain crosses the membrane as a helical span at residues 224–244; the sequence is FLFVFGIEFLGPVFTMTLCYA. Topologically, residues 245 to 273 are cytoplasmic; the sequence is RISRELWFKAVPGFQTEQIRKRLRCRRKT. A helical transmembrane segment spans residues 274-294; that stretch reads VLVLMCILTAYVLCWAPFYGF. The Extracellular portion of the chain corresponds to 295-313; it reads TIVRDFFPTVFVKEKHYLT. Residues 314–334 form a helical membrane-spanning segment; that stretch reads AFYVVECIAMSNSMINTVCFV. Over 335 to 384 the chain is Cytoplasmic; the sequence is TVKNSTMKYFKKMLLLHWRPSHHGSKSSADLDLKTSRLPATEEVDCIRLK.

It belongs to the G-protein coupled receptor 1 family. In terms of assembly, homodimer.

Its subcellular location is the cell membrane. In terms of biological role, receptor for prokineticin 2. Exclusively coupled to the G(q) subclass of heteromeric G proteins. Activation leads to mobilization of calcium, stimulation of phosphoinositide turnover and activation of p44/p42 mitogen-activated protein kinase. This chain is Prokineticin receptor 2 (PROKR2), found in Bos taurus (Bovine).